We begin with the raw amino-acid sequence, 491 residues long: Glutamyl-tRNA(Gln) amidotransferase subunit A (491 aa).

Catalysis depends on charge relay system residues K78 and S158. S182 acts as the Acyl-ester intermediate in catalysis.

This sequence belongs to the amidase family. GatA subfamily. As to quaternary structure, heterotrimer of A, B and C subunits.

The enzyme catalyses L-glutamyl-tRNA(Gln) + L-glutamine + ATP + H2O = L-glutaminyl-tRNA(Gln) + L-glutamate + ADP + phosphate + H(+). Its function is as follows. Allows the formation of correctly charged Gln-tRNA(Gln) through the transamidation of misacylated Glu-tRNA(Gln) in organisms which lack glutaminyl-tRNA synthetase. The reaction takes place in the presence of glutamine and ATP through an activated gamma-phospho-Glu-tRNA(Gln). The chain is Glutamyl-tRNA(Gln) amidotransferase subunit A from Nitrobacter winogradskyi (strain ATCC 25391 / DSM 10237 / CIP 104748 / NCIMB 11846 / Nb-255).